The following is an 882-amino-acid chain: Alanine--tRNA ligase (882 aa).

The Zn(2+) site is built by histidine 570, histidine 574, cysteine 672, and histidine 676.

It belongs to the class-II aminoacyl-tRNA synthetase family. It depends on Zn(2+) as a cofactor.

Its subcellular location is the cytoplasm. It catalyses the reaction tRNA(Ala) + L-alanine + ATP = L-alanyl-tRNA(Ala) + AMP + diphosphate. Functionally, catalyzes the attachment of alanine to tRNA(Ala) in a two-step reaction: alanine is first activated by ATP to form Ala-AMP and then transferred to the acceptor end of tRNA(Ala). Also edits incorrectly charged Ser-tRNA(Ala) and Gly-tRNA(Ala) via its editing domain. This chain is Alanine--tRNA ligase, found in Xanthomonas campestris pv. campestris (strain 8004).